The sequence spans 98 residues: MSMVYINIFLAFILSFMGLLIYRSHLMSSLLCLEGMMLSLFIMMTVTILTNHLTLASMTPIILLVFAACEAALGLSLLVMISNTYGTDYVQNLNLLQC.

3 consecutive transmembrane segments (helical) span residues 1–21 (MSMV…GLLI), 30–50 (LLCL…TILT), and 61–81 (IILL…LVMI).

This sequence belongs to the complex I subunit 4L family. In terms of assembly, core subunit of respiratory chain NADH dehydrogenase (Complex I) which is composed of 45 different subunits.

Its subcellular location is the mitochondrion inner membrane. The enzyme catalyses a ubiquinone + NADH + 5 H(+)(in) = a ubiquinol + NAD(+) + 4 H(+)(out). In terms of biological role, core subunit of the mitochondrial membrane respiratory chain NADH dehydrogenase (Complex I) which catalyzes electron transfer from NADH through the respiratory chain, using ubiquinone as an electron acceptor. Part of the enzyme membrane arm which is embedded in the lipid bilayer and involved in proton translocation. The polypeptide is NADH-ubiquinone oxidoreductase chain 4L (MT-ND4L) (Martes americana (American marten)).